The chain runs to 305 residues: HTH-type transcriptional regulator KdgR (305 aa).

The HTH iclR-type domain maps to 55–116 (VSSVLKVFGI…GESEKYSLTL (62 aa)). A DNA-binding region (H-T-H motif) is located at residues 76–95 (ITELSQRVMMSKSTVYRFLQ). The IclR-ED domain occupies 131-300 (LIRSADIQMR…ARNISDQMGY (170 aa)).

In terms of assembly, homodimer.

The protein resides in the cytoplasm. Functionally, transcriptional repressor that negatively regulates the expression of genes involved in pectinolysis and in pectinase secretion. Controls genes involved in pectin catabolism, including the pectinase genes (pelA, pelB, pelC, pelE), genes involved in pectin catabolism (kdgT, ogl, kduI-kdgF) and the outT gene involved in pectinase secretion. Acts by binding directly to KdgR binding sites (KdgR-box) in the gene operator/promoter region. This chain is HTH-type transcriptional regulator KdgR, found in Dickeya chrysanthemi (Pectobacterium chrysanthemi).